Here is a 44-residue protein sequence, read N- to C-terminus: Photosystem I reaction center subunit IX (44 aa).

Residues Phe-9 to Ile-29 form a helical membrane-spanning segment.

It belongs to the PsaJ family.

The protein localises to the cellular thylakoid membrane. In terms of biological role, may help in the organization of the PsaE and PsaF subunits. This is Photosystem I reaction center subunit IX from Prochlorococcus marinus subsp. pastoris (strain CCMP1986 / NIES-2087 / MED4).